We begin with the raw amino-acid sequence, 327 residues long: ATPase GET3 (327 aa).

27–34 (KGGVGKTT) contributes to the ATP binding site. The active site involves aspartate 56. ATP is bound by residues glutamate 231 and asparagine 258. Residues cysteine 269 and cysteine 272 each coordinate Zn(2+).

It belongs to the arsA ATPase family. In terms of assembly, homodimer. Component of the Golgi to ER traffic (GET) complex, which is composed of GET1, GET2 and GET3. Within the complex, GET1 and GET2 form a heterotetramer which is stabilized by phosphatidylinositol binding and which binds to the GET3 homodimer. Interacts with the chloride channel protein GEF1.

The protein resides in the cytoplasm. It is found in the endoplasmic reticulum. Its subcellular location is the golgi apparatus. Its function is as follows. ATPase required for the post-translational delivery of tail-anchored (TA) proteins to the endoplasmic reticulum. Recognizes and selectively binds the transmembrane domain of TA proteins in the cytosol. This complex then targets to the endoplasmic reticulum by membrane-bound receptors GET1 and GET2, where the tail-anchored protein is released for insertion. This process is regulated by ATP binding and hydrolysis. ATP binding drives the homodimer towards the closed dimer state, facilitating recognition of newly synthesized TA membrane proteins. ATP hydrolysis is required for insertion. Subsequently, the homodimer reverts towards the open dimer state, lowering its affinity for the GET1-GET2 receptor, and returning it to the cytosol to initiate a new round of targeting. Cooperates with the HDEL receptor ERD2 to mediate the ATP-dependent retrieval of resident ER proteins that contain a C-terminal H-D-E-L retention signal from the Golgi to the ER. Involved in low-level resistance to the oxyanions arsenite and arsenate, and in heat tolerance. In Yarrowia lipolytica (strain CLIB 122 / E 150) (Yeast), this protein is ATPase GET3.